The primary structure comprises 198 residues: TATA-box-binding protein (198 aa).

Repeat copies occupy residues 14 to 90 (IENI…IKTL) and 105 to 181 (IQNI…FDKL).

Belongs to the TBP family.

In terms of biological role, general factor that plays a role in the activation of archaeal genes transcribed by RNA polymerase. Binds specifically to the TATA box promoter element which lies close to the position of transcription initiation. The protein is TATA-box-binding protein of Saccharolobus shibatae (strain ATCC 51178 / DSM 5389 / JCM 8931 / NBRC 15437 / B12) (Sulfolobus shibatae).